The sequence spans 90 residues: Probable small nuclear ribonucleoprotein E (90 aa).

The Sm domain maps to 14–89 (VNLIFRYLQN…ITLIHAAQQE (76 aa)).

It belongs to the snRNP Sm proteins family. As to quaternary structure, core component of the spliceosomal U1, U2, U4 and U5 small nuclear ribonucleoproteins (snRNPs), the building blocks of the spliceosome.

The protein resides in the nucleus. The protein localises to the cytoplasm. It is found in the cytosol. Its function is as follows. Plays a role in pre-mRNA splicing as a core component of the spliceosomal U1, U2, U4 and U5 small nuclear ribonucleoproteins (snRNPs), the building blocks of the spliceosome. This chain is Probable small nuclear ribonucleoprotein E (snr-6), found in Caenorhabditis elegans.